We begin with the raw amino-acid sequence, 231 residues long: Chromosome partition protein MukE (231 aa).

The disordered stretch occupies residues 204–231 (TPEPSQQSLLENPTAEYDEEQTEWEDEA). Positions 219–231 (EYDEEQTEWEDEA) are enriched in acidic residues.

This sequence belongs to the MukE family. Interacts, and probably forms a ternary complex, with MukF and MukB. The complex formation is stimulated by calcium or magnesium.

It localises to the cytoplasm. The protein localises to the nucleoid. Involved in chromosome condensation, segregation and cell cycle progression. May participate in facilitating chromosome segregation by condensation DNA from both sides of a centrally located replisome during cell division. Probably acts via its interaction with MukB and MukF. In Vibrio cholerae serotype O1 (strain ATCC 39315 / El Tor Inaba N16961), this protein is Chromosome partition protein MukE.